The following is a 259-amino-acid chain: MIQIDALPAFSDNYIWLLQDTAKRRCAVVDPGDAAPVEAWLAANPDWVLEDILVTHHHNDHVGGVERLKKLTGARVSGPANERIPCRDLALDEGDEVTAVGVTFQVLAVPGHTLGHIAFFSDQPATPVLFSGDTLFAAGCGRMFEGTPEQMQPALARLASLPERTEVYCAHEYTLSNLRFAKAVEPQNPHVLQRFDDVTRLRADNRITLPSTIGLERLTNPFLRTSATLVKQKADEWKGHSNTTHVAVFAALRSWKDTF.

Positions 56, 58, 60, 61, 112, 133, and 171 each coordinate Zn(2+).

The protein belongs to the metallo-beta-lactamase superfamily. Glyoxalase II family. As to quaternary structure, monomer. Zn(2+) serves as cofactor.

The enzyme catalyses an S-(2-hydroxyacyl)glutathione + H2O = a 2-hydroxy carboxylate + glutathione + H(+). It participates in secondary metabolite metabolism; methylglyoxal degradation; (R)-lactate from methylglyoxal: step 2/2. In terms of biological role, thiolesterase that catalyzes the hydrolysis of S-D-lactoyl-glutathione to form glutathione and D-lactic acid. This is Hydroxyacylglutathione hydrolase from Pseudomonas putida (strain W619).